The following is a 470-amino-acid chain: Ribulose bisphosphate carboxylase large chain (470 aa).

The substrate site is built by asparagine 115 and threonine 165. Catalysis depends on lysine 167, which acts as the Proton acceptor. Lysine 169 serves as a coordination point for substrate. Mg(2+)-binding residues include lysine 193, aspartate 195, and glutamate 196. Lysine 193 is modified (N6-carboxylysine). The active-site Proton acceptor is histidine 286. 3 residues coordinate substrate: arginine 287, histidine 319, and serine 371.

Belongs to the RuBisCO large chain family. Type I subfamily. As to quaternary structure, heterohexadecamer of 8 large chains and 8 small chains. The cofactor is Mg(2+).

It localises to the carboxysome. The catalysed reaction is 2 (2R)-3-phosphoglycerate + 2 H(+) = D-ribulose 1,5-bisphosphate + CO2 + H2O. It carries out the reaction D-ribulose 1,5-bisphosphate + O2 = 2-phosphoglycolate + (2R)-3-phosphoglycerate + 2 H(+). Its function is as follows. RuBisCO catalyzes two reactions: the carboxylation of D-ribulose 1,5-bisphosphate, the primary event in carbon dioxide fixation, as well as the oxidative fragmentation of the pentose substrate in the photorespiration process. Both reactions occur simultaneously and in competition at the same active site. This Prochlorococcus marinus (strain MIT 9303) protein is Ribulose bisphosphate carboxylase large chain.